Here is a 191-residue protein sequence, read N- to C-terminus: Prostaglandin-H2 D-isomerase (191 aa).

Residues 1–24 (MATPNRPWMGLLLLGVLGVLQTPA) form the signal peptide. Residue Asn-51 is glycosylated (N-linked (GlcNAc...) asparagine). Cys-65 serves as the catalytic Nucleophile. An N-linked (GlcNAc...) asparagine glycan is attached at Asn-78. A disulfide bond links Cys-89 and Cys-186.

It belongs to the calycin superfamily. Lipocalin family. As to quaternary structure, monomer. In the male reproductive system, it is expressed in the testis and epididymis, and is secreted into the seminal fluid.

The protein localises to the rough endoplasmic reticulum. It is found in the nucleus membrane. The protein resides in the golgi apparatus. Its subcellular location is the cytoplasm. It localises to the perinuclear region. The protein localises to the secreted. It catalyses the reaction prostaglandin H2 = prostaglandin D2. Functionally, catalyzes the conversion of PGH2 to PGD2, a prostaglandin involved in smooth muscle contraction/relaxation and a potent inhibitor of platelet aggregation. Involved in a variety of CNS functions, such as sedation, NREM sleep and PGE2-induced allodynia, and may have an anti-apoptotic role in oligodendrocytes. Binds small non-substrate lipophilic molecules, including biliverdin, bilirubin, retinal, retinoic acid and thyroid hormone, and may act as a scavenger for harmful hydrophobic molecules and as a secretory retinoid and thyroid hormone transporter. Possibly involved in development and maintenance of the blood-brain, blood-retina, blood-aqueous humor and blood-testis barrier. It is likely to play important roles in both maturation and maintenance of the central nervous system and male reproductive system. Involved in PLA2G3-dependent maturation of mast cells. PLA2G3 is secreted by immature mast cells and acts on nearby fibroblasts upstream to PTDGS to synthesize PGD2, which in turn promotes mast cell maturation and degranulation via PTGDR. The chain is Prostaglandin-H2 D-isomerase (PTGDS) from Ovis aries (Sheep).